Reading from the N-terminus, the 528-residue chain is GMP synthase [glutamine-hydrolyzing] (528 aa).

One can recognise a Glutamine amidotransferase type-1 domain in the interval 3-199 (KVAIIDFGSQ…FLDIAGCQKD (197 aa)). C83 serves as the catalytic Nucleophile. Catalysis depends on residues H174 and E176. One can recognise a GMPS ATP-PPase domain in the interval 200-394 (WTVTSFIDDQ…LGISTEILMR (195 aa)). 227-233 (SGGVDSS) is a binding site for ATP.

Homodimer.

It catalyses the reaction XMP + L-glutamine + ATP + H2O = GMP + L-glutamate + AMP + diphosphate + 2 H(+). It participates in purine metabolism; GMP biosynthesis; GMP from XMP (L-Gln route): step 1/1. In terms of biological role, catalyzes the synthesis of GMP from XMP. This Ehrlichia ruminantium (strain Welgevonden) protein is GMP synthase [glutamine-hydrolyzing].